The chain runs to 174 residues: Urease accessory protein UreE (174 aa).

This sequence belongs to the UreE family.

It is found in the cytoplasm. Its function is as follows. Involved in urease metallocenter assembly. Binds nickel. Probably functions as a nickel donor during metallocenter assembly. The chain is Urease accessory protein UreE from Helicobacter hepaticus (strain ATCC 51449 / 3B1).